The primary structure comprises 63 residues: Large ribosomal subunit protein uL29 (63 aa).

It belongs to the universal ribosomal protein uL29 family.

This Sulfurovum sp. (strain NBC37-1) protein is Large ribosomal subunit protein uL29.